A 192-amino-acid polypeptide reads, in one-letter code: Transmembrane protein 276 (192 aa).

Residues 1–32 form the signal peptide; that stretch reads MAPKPGAEWSTALSHLVLGVVSLHAAVSTAEA. Helical transmembrane passes span 35–55, 63–83, 89–109, and 114–134; these read GAAAGFLLQVLAATTTLAPGL, AGAWVATVIGLPLLAFDFHWV, SANLLLGGGMVLAVAGGHLGP, and VAGQAMLLVVAVTILIVAVFT.

Its subcellular location is the membrane. The protein is Transmembrane protein 276 of Homo sapiens (Human).